Consider the following 238-residue polypeptide: LexA repressor (238 aa).

Residues 26-46 (FDEMKDALDLASKSGIHRLIT) constitute a DNA-binding region (H-T-H motif). Catalysis depends on for autocatalytic cleavage activity residues S158 and K196.

Belongs to the peptidase S24 family. In terms of assembly, homodimer.

The catalysed reaction is Hydrolysis of Ala-|-Gly bond in repressor LexA.. In terms of biological role, represses a number of genes involved in the response to DNA damage (SOS response), including recA and lexA. In the presence of single-stranded DNA, RecA interacts with LexA causing an autocatalytic cleavage which disrupts the DNA-binding part of LexA, leading to derepression of the SOS regulon and eventually DNA repair. This chain is LexA repressor, found in Rhizobium meliloti (strain 1021) (Ensifer meliloti).